Consider the following 183-residue polypeptide: Non-classical export protein 2 homolog (183 aa).

Topologically, residues 1–8 are cytoplasmic; sequence MVGIRQYG. The chain crosses the membrane as a helical span at residues 9–29; it reads VFTWVFRTFQLAIDTIVLALA. The Extracellular segment spans residues 30–44; that stretch reads SALVNQQTSGGSPGK. Residues 45–65 traverse the membrane as a helical segment; it reads INFSVAVGSFAILTFFLTAVG. Residues 66 to 75 lie on the Cytoplasmic side of the membrane; sequence RFLPTILGNP. The chain crosses the membrane as a helical span at residues 76–96; sequence WLIAFYDFVNWVFALTGGCCI. The Extracellular portion of the chain corresponds to 97-131; it reads AVAIRVHACDNQKYLDRNHYTQGSMRRCQELKALC. The chain crosses the membrane as a helical span at residues 132–152; it reads FFLWFMFGLYVASFIVQIFIA. Over 153-183 the chain is Cytoplasmic; the sequence is KNDTPNYTFRGRGRGKGSGPAVAPRPVMSAV. Residues 163–183 are disordered; it reads GRGRGKGSGPAVAPRPVMSAV.

The protein belongs to the NCE102 family.

Its subcellular location is the cytoplasm. The protein localises to the golgi apparatus membrane. It is found in the cell membrane. In terms of biological role, involved in membrane organization and might act as a sensor of sphingolipids that regulates plasma membrane function. Involved in a novel pathway of export of proteins that lack a cleavable signal sequence. This chain is Non-classical export protein 2 homolog (fhn1), found in Schizosaccharomyces pombe (strain 972 / ATCC 24843) (Fission yeast).